A 164-amino-acid polypeptide reads, in one-letter code: Crossover junction endodeoxyribonuclease RuvC (164 aa).

Catalysis depends on residues D7, E67, and D140. Residues D7, E67, and D140 each contribute to the Mg(2+) site.

It belongs to the RuvC family. In terms of assembly, homodimer which binds Holliday junction (HJ) DNA. The HJ becomes 2-fold symmetrical on binding to RuvC with unstacked arms; it has a different conformation from HJ DNA in complex with RuvA. In the full resolvosome a probable DNA-RuvA(4)-RuvB(12)-RuvC(2) complex forms which resolves the HJ. Requires Mg(2+) as cofactor.

The protein resides in the cytoplasm. It catalyses the reaction Endonucleolytic cleavage at a junction such as a reciprocal single-stranded crossover between two homologous DNA duplexes (Holliday junction).. Its function is as follows. The RuvA-RuvB-RuvC complex processes Holliday junction (HJ) DNA during genetic recombination and DNA repair. Endonuclease that resolves HJ intermediates. Cleaves cruciform DNA by making single-stranded nicks across the HJ at symmetrical positions within the homologous arms, yielding a 5'-phosphate and a 3'-hydroxyl group; requires a central core of homology in the junction. The consensus cleavage sequence is 5'-(A/T)TT(C/G)-3'. Cleavage occurs on the 3'-side of the TT dinucleotide at the point of strand exchange. HJ branch migration catalyzed by RuvA-RuvB allows RuvC to scan DNA until it finds its consensus sequence, where it cleaves and resolves the cruciform DNA. The protein is Crossover junction endodeoxyribonuclease RuvC of Chloroflexus aurantiacus (strain ATCC 29364 / DSM 637 / Y-400-fl).